The following is a 244-amino-acid chain: Small ribosomal subunit protein uS2 (244 aa).

It belongs to the universal ribosomal protein uS2 family.

The protein is Small ribosomal subunit protein uS2 of Buchnera aphidicola subsp. Schizaphis graminum (strain Sg).